We begin with the raw amino-acid sequence, 83 residues long: Protein kreg-1 (83 aa).

Residues 62–83 (GHHHHHHGHHFGHHHHHHHGHH) are disordered.

Weakly expressed in the intestine, but expression is up-regulated in response to Cu(2+).

Plays a role in the stress response to heavy metals such as copper, probably in a fos-1/kgb-1-dependent manner. The polypeptide is Protein kreg-1 (Caenorhabditis elegans).